We begin with the raw amino-acid sequence, 305 residues long: Serine/threonine-protein phosphatase PP1-delta (305 aa).

Residues Asp-62, His-64, Asp-90, and Asn-122 each contribute to the Mn(2+) site. The active-site Proton donor is His-123. His-172 and His-247 together coordinate Mn(2+).

This sequence belongs to the PPP phosphatase family. In terms of tissue distribution, expressed in male germline including spermatocytes, spermatids and spermatozoa.

The protein localises to the chromosome. The protein resides in the cell projection. It localises to the pseudopodium. It is found in the cytoplasm. The enzyme catalyses O-phospho-L-seryl-[protein] + H2O = L-seryl-[protein] + phosphate. The catalysed reaction is O-phospho-L-threonyl-[protein] + H2O = L-threonyl-[protein] + phosphate. Functionally, probable phosphatase which plays a redundant role with gsp-4 in spermatogenesis by regulating sister chromatid segregation during meiosis. In addition, involved in sperm motility by controlling the dynamic disassembly of major sperm proteins (MSP) in the spermatozoan pseudopodium. In Caenorhabditis elegans, this protein is Serine/threonine-protein phosphatase PP1-delta.